Here is a 553-residue protein sequence, read N- to C-terminus: Flotillin family inner membrane protein YqiK (553 aa).

Topologically, residues 1-9 are periplasmic; sequence MDDIVNSVP. The helical transmembrane segment at 10-30 threads the bilayer; that stretch reads SWMFTAIIAVCILFIIGIIFA. The Cytoplasmic portion of the chain corresponds to 31 to 553; sequence RLYRRASAEQ…STTPVEEKAE (523 aa).

It belongs to the band 7/mec-2 family. Flotillin subfamily. As to quaternary structure, homooligomerizes.

The protein localises to the cell inner membrane. The protein resides in the membrane raft. In terms of biological role, found in membrane microdomains that may be equivalent to eukaryotic membrane rafts. FMMs are highly dynamic and increase in number as cells age. Flotillins are thought to be important factors in membrane fluidity. The sequence is that of Flotillin family inner membrane protein YqiK (yqiK) from Escherichia coli (strain K12).